The primary structure comprises 312 residues: Acetyl-coenzyme A carboxylase carboxyl transferase subunit alpha (312 aa).

The CoA carboxyltransferase C-terminal domain occupies asparagine 36 to glutamate 286.

It belongs to the AccA family. In terms of assembly, acetyl-CoA carboxylase is a heterohexamer composed of biotin carboxyl carrier protein (AccB), biotin carboxylase (AccC) and two subunits each of ACCase subunit alpha (AccA) and ACCase subunit beta (AccD).

The protein resides in the cytoplasm. It catalyses the reaction N(6)-carboxybiotinyl-L-lysyl-[protein] + acetyl-CoA = N(6)-biotinyl-L-lysyl-[protein] + malonyl-CoA. The protein operates within lipid metabolism; malonyl-CoA biosynthesis; malonyl-CoA from acetyl-CoA: step 1/1. Its function is as follows. Component of the acetyl coenzyme A carboxylase (ACC) complex. First, biotin carboxylase catalyzes the carboxylation of biotin on its carrier protein (BCCP) and then the CO(2) group is transferred by the carboxyltransferase to acetyl-CoA to form malonyl-CoA. This is Acetyl-coenzyme A carboxylase carboxyl transferase subunit alpha from Campylobacter jejuni subsp. jejuni serotype O:23/36 (strain 81-176).